The following is a 287-amino-acid chain: RNA polymerase sigma factor RpoH (287 aa).

Residues 54-123 (LILSHLRFVI…IHEYVLRNWR (70 aa)) form a sigma-70 factor domain-2 region. Residues 78-81 (DLIQ) carry the Interaction with polymerase core subunit RpoC motif. The segment at 230-283 (ALSSLDERSRNIIHARWLDDSDHKMTLREIAHNYGISAERVRQLEKNAMKKLKV) is sigma-70 factor domain-4. A DNA-binding region (H-T-H motif) is located at residues 256–275 (LREIAHNYGISAERVRQLEK).

It belongs to the sigma-70 factor family. RpoH subfamily. Interacts with the RNA polymerase core enzyme.

It is found in the cytoplasm. Its function is as follows. Sigma factors are initiation factors that promote the attachment of RNA polymerase to specific initiation sites and are then released. This sigma factor is involved in regulation of expression of heat shock genes. The sequence is that of RNA polymerase sigma factor RpoH from Buchnera aphidicola subsp. Baizongia pistaciae (strain Bp).